The primary structure comprises 46 residues: Esculentin-1R (46 aa).

Residues Cys40 and Cys46 are joined by a disulfide bond.

In terms of tissue distribution, expressed by the skin glands.

The protein resides in the secreted. Its function is as follows. Shows antibacterial activity against representative Gram-negative and Gram-positive bacterial species, and hemolytic activity. The polypeptide is Esculentin-1R (Pelophylax ridibundus (Marsh frog)).